Consider the following 120-residue polypeptide: Testis-expressed protein 48 (120 aa).

Residues 29-45 show a composition bias toward polar residues; it reads KVPSQTQEHKPSTQNLL. The disordered stretch occupies residues 29–86; it reads KVPSQTQEHKPSTQNLLLQKDELDRQNPKRINAVSHLPSRTPLIQTKKSTSSSSSEFE. Residues 74–83 are compositionally biased toward low complexity; it reads TKKSTSSSSS.

The protein is Testis-expressed protein 48 of Homo sapiens (Human).